Here is a 479-residue protein sequence, read N- to C-terminus: Adenosylhomocysteinase (479 aa).

Threonine 56, aspartate 133, and glutamate 199 together coordinate substrate. NAD(+) is bound at residue 200-202 (TTT). Residues lysine 229 and aspartate 233 each coordinate substrate. NAD(+) is bound by residues asparagine 234, 263 to 268 (GYGDVG), glutamate 286, asparagine 321, 342 to 344 (IGH), and asparagine 390.

This sequence belongs to the adenosylhomocysteinase family. In terms of assembly, homotetramer. It depends on NAD(+) as a cofactor.

It catalyses the reaction S-adenosyl-L-homocysteine + H2O = L-homocysteine + adenosine. The protein operates within amino-acid biosynthesis; L-homocysteine biosynthesis; L-homocysteine from S-adenosyl-L-homocysteine: step 1/1. In terms of biological role, adenosylhomocysteine is a competitive inhibitor of S-adenosyl-L-methionine-dependent methyl transferase reactions; therefore adenosylhomocysteinase may play a key role in the control of methylations via regulation of the intracellular concentration of adenosylhomocysteine. This is Adenosylhomocysteinase from Plasmodium yoelii yoelii.